A 428-amino-acid polypeptide reads, in one-letter code: uncharacterized protein (428 aa).

Residues 72-91 (SQGSPVAPSPNHRSTMYSSS) form a disordered region. S127 is modified (phosphoserine).

This is an uncharacterized protein from Saccharomyces cerevisiae (strain ATCC 204508 / S288c) (Baker's yeast).